The chain runs to 161 residues: Endoribonuclease YbeY (161 aa).

Zn(2+) contacts are provided by His121, His125, and His131.

This sequence belongs to the endoribonuclease YbeY family. It depends on Zn(2+) as a cofactor.

The protein resides in the cytoplasm. Single strand-specific metallo-endoribonuclease involved in late-stage 70S ribosome quality control and in maturation of the 3' terminus of the 16S rRNA. This Stenotrophomonas maltophilia (strain R551-3) protein is Endoribonuclease YbeY.